Here is a 492-residue protein sequence, read N- to C-terminus: MANYFNSLNLRQQLAQLGQCRFMDRSEFSDGCNYIKDWNIVILGCGAQGLNQGLNMRDSGLNIAYALRPEAIAQKRASWQKATDNGFKVGTFEELIPSADLVLNLTPDKQHSNVVSAVMPLMKQGATLSYSHGFNIVEEGMQIRPDITVIMVAPKCPGTEVREEYKRGFGVPTLIAVHPENDPNGDGLDIAKAYASATGGDRAGVLQSSFIAEVKSDLMGEQTILCGMLQTGAILGYEKMVADGVEPGYAAKLIQQGWETVTEALKHGGITNMMDRLSNPAKIKAFEIAEDLKDILQPLFEKHMDDIISGEFSRTMMQDWANDDANLLRWRAETGETGFENAPVSSEHIDEQTYFDKGIFLVAMIKAGVELAFDTMVSAGIVEESAYYESLHETPLIANTIARKRLYEMNVVISDTAEYGCYLFNHAAVPLLRDYVNAMSPEYLGAGLKDSSNSVDNLQLIAINDAIRHTAVEYVGAELRGYMTDMKSIVGA.

Residues 15-208 (AQLGQCRFMD…GGDRAGVLQS (194 aa)) enclose the KARI N-terminal Rossmann domain. Residues 45-48 (CGAQ), Arg-68, Arg-76, Ser-78, and 108-110 (DKQ) contribute to the NADP(+) site. His-132 is an active-site residue. NADP(+) is bound at residue Gly-158. KARI C-terminal knotted domains lie at 209-353 (SFIA…DEQT) and 354-486 (YFDK…MTDM). 4 residues coordinate Mg(2+): Asp-217, Glu-221, Glu-389, and Glu-393. Ser-414 is a substrate binding site.

Belongs to the ketol-acid reductoisomerase family. Requires Mg(2+) as cofactor.

It catalyses the reaction (2R)-2,3-dihydroxy-3-methylbutanoate + NADP(+) = (2S)-2-acetolactate + NADPH + H(+). The enzyme catalyses (2R,3R)-2,3-dihydroxy-3-methylpentanoate + NADP(+) = (S)-2-ethyl-2-hydroxy-3-oxobutanoate + NADPH + H(+). The protein operates within amino-acid biosynthesis; L-isoleucine biosynthesis; L-isoleucine from 2-oxobutanoate: step 2/4. Its pathway is amino-acid biosynthesis; L-valine biosynthesis; L-valine from pyruvate: step 2/4. In terms of biological role, involved in the biosynthesis of branched-chain amino acids (BCAA). Catalyzes an alkyl-migration followed by a ketol-acid reduction of (S)-2-acetolactate (S2AL) to yield (R)-2,3-dihydroxy-isovalerate. In the isomerase reaction, S2AL is rearranged via a Mg-dependent methyl migration to produce 3-hydroxy-3-methyl-2-ketobutyrate (HMKB). In the reductase reaction, this 2-ketoacid undergoes a metal-dependent reduction by NADPH to yield (R)-2,3-dihydroxy-isovalerate. The protein is Ketol-acid reductoisomerase (NADP(+)) of Shewanella oneidensis (strain ATCC 700550 / JCM 31522 / CIP 106686 / LMG 19005 / NCIMB 14063 / MR-1).